The chain runs to 430 residues: Tol-Pal system protein TolB (430 aa).

Positions 1-21 (MKQALRVAFGFLILWASVLHA) are cleaved as a signal peptide.

Belongs to the TolB family. The Tol-Pal system is composed of five core proteins: the inner membrane proteins TolA, TolQ and TolR, the periplasmic protein TolB and the outer membrane protein Pal. They form a network linking the inner and outer membranes and the peptidoglycan layer.

The protein resides in the periplasm. Functionally, part of the Tol-Pal system, which plays a role in outer membrane invagination during cell division and is important for maintaining outer membrane integrity. TolB occupies a key intermediary position in the Tol-Pal system because it communicates directly with both membrane-embedded components, Pal in the outer membrane and TolA in the inner membrane. This chain is Tol-Pal system protein TolB, found in Shigella flexneri serotype 5b (strain 8401).